The following is a 134-amino-acid chain: Proline-rich protein 4 (134 aa).

A signal peptide spans 1-16; that stretch reads MLLVLLSVVLLALSSA. The disordered stretch occupies residues 28-134; it reads FTFTIPDVED…ARHPQEQPLW (107 aa). Over residues 47 to 59 the composition is skewed to pro residues; the sequence is QRPPPEGLLPRPP. Over residues 110–119 the composition is skewed to polar residues; the sequence is VSLQEASSFF. The segment covering 120–134 has biased composition (basic and acidic residues); sequence QRDRPARHPQEQPLW.

In terms of tissue distribution, abundantly expressed in lacrimal gland where it is found in the acinar cells but not in the intralobular ducts. Also found in the submandibular gland, the parotid and sublingual glands.

The protein localises to the secreted. The chain is Proline-rich protein 4 (PRR4) from Homo sapiens (Human).